The chain runs to 805 residues: Putative cation-transporting ATPase MJ1226 (805 aa).

A run of 4 helical transmembrane segments spans residues 53-73 (SYFW…SAII), 75-95 (HWVD…VGFW), 226-246 (IGDY…AVEL), and 258-278 (FALV…LSIT). Asp-311 functions as the 4-aspartylphosphate intermediate in the catalytic mechanism. 6 helical membrane-spanning segments follow: residues 615 to 637 (YVIY…ILIL), 641 to 663 (PITA…AIAY), 680 to 700 (ILML…LIFY), 712 to 734 (ELQS…VTRI), 747 to 769 (LLFW…GIFM), and 773 to 790 (GWDL…WMLI).

This sequence belongs to the cation transport ATPase (P-type) (TC 3.A.3) family. Type IIIA subfamily.

It is found in the cell membrane. The enzyme catalyses ATP + H2O = ADP + phosphate + H(+). This is Putative cation-transporting ATPase MJ1226 from Methanocaldococcus jannaschii (strain ATCC 43067 / DSM 2661 / JAL-1 / JCM 10045 / NBRC 100440) (Methanococcus jannaschii).